A 361-amino-acid polypeptide reads, in one-letter code: Peptide chain release factor 1 (361 aa).

Q237 bears the N5-methylglutamine mark. Basic and acidic residues predominate over residues 283-296; sequence VEDEKRRSEEESTR. Residues 283–305 are disordered; sequence VEDEKRRSEEESTRRNLVSSGDR.

This sequence belongs to the prokaryotic/mitochondrial release factor family. Methylated by PrmC. Methylation increases the termination efficiency of RF1.

It is found in the cytoplasm. Its function is as follows. Peptide chain release factor 1 directs the termination of translation in response to the peptide chain termination codons UAG and UAA. The sequence is that of Peptide chain release factor 1 from Shewanella woodyi (strain ATCC 51908 / MS32).